We begin with the raw amino-acid sequence, 564 residues long: Septation ring formation regulator EzrA (564 aa).

Residues 1–4 (MVLF) lie on the Extracellular side of the membrane. A helical transmembrane segment spans residues 5-23 (IILAILVVILIAIGVLFYM). Over 24–564 (RSNKRNLIEK…KHIEEQVIKE (541 aa)) the chain is Cytoplasmic. Coiled-coil stretches lie at residues 84-126 (VEEK…HQVT), 165-223 (EAAE…LIRE), 271-303 (MISR…YEVK), and 350-435 (VRQF…RRLL).

This sequence belongs to the EzrA family.

It localises to the cell membrane. Negative regulator of FtsZ ring formation; modulates the frequency and position of FtsZ ring formation. Inhibits FtsZ ring formation at polar sites. Interacts either with FtsZ or with one of its binding partners to promote depolymerization. In Staphylococcus epidermidis (strain ATCC 35984 / DSM 28319 / BCRC 17069 / CCUG 31568 / BM 3577 / RP62A), this protein is Septation ring formation regulator EzrA.